Reading from the N-terminus, the 375-residue chain is Glutaconyl-CoA decarboxylase subunit beta (375 aa).

Transmembrane regions (helical) follow at residues 16–39, 46–65, 74–96, 107–130, 137–153, 160–178, 208–232, 254–271, 284–302, 316–332, and 345–369; these read GFVA…YLAI, LLLS…RTGF, LILG…GAMT, TLLL…LLGF, AIGI…IYLA, LLGA…VPLI, VVFP…IGML, ALMN…GLTM, IICL…GVLF, PLIG…AARV, and FLLM…GTML.

It belongs to the GcdB/MmdB/OadB family. Heterooctamer consisting of two alpha, two beta, two gamma and two delta subunits. In terms of processing, the N-terminus is blocked.

It is found in the cell membrane. The catalysed reaction is (2E)-glutaconyl-CoA + Na(+)(in) + H(+) = (2E)-butenoyl-CoA + Na(+)(out) + CO2. Its pathway is amino-acid degradation; L-glutamate degradation via hydroxyglutarate pathway; crotonoyl-CoA from L-glutamate: step 5/5. Functionally, tunnel subunit of the primary sodium pump glutaconyl-CoA decarboxylase (GCD). The polypeptide is Glutaconyl-CoA decarboxylase subunit beta (gcdB) (Acidaminococcus fermentans (strain ATCC 25085 / DSM 20731 / CCUG 9996 / CIP 106432 / VR4)).